A 1093-amino-acid chain; its full sequence is Semaphorin-5B (1093 aa).

A signal peptide spans 1–19; the sequence is MVVPGPLALSLLLSSLTLL. Topologically, residues 20-978 are extracellular; the sequence is VSHLSSSQDI…TSCGGFNLIH (959 aa). Positions 45 to 495 constitute a Sema domain; that stretch reads HPIVAFEDLK…LSDRVLRVPL (451 aa). 2 N-linked (GlcNAc...) asparagine glycosylation sites follow: Asn-59 and Asn-95. Intrachain disulfides connect Cys-114–Cys-124 and Cys-141–Cys-150. Residues Asn-157, Asn-178, and Asn-287 are each glycosylated (N-linked (GlcNAc...) asparagine). 2 disulfide bridges follow: Cys-264-Cys-367 and Cys-288-Cys-330. Residues Asn-333, Asn-378, Asn-532, Asn-539, Asn-547, and Asn-602 are each glycosylated (N-linked (GlcNAc...) asparagine). TSP type-1 domains are found at residues 551–605, 606–662, 664–713, 721–776, 795–850, 852–907, and 908–952; these read DGGF…NCSR, NGAW…TPCP, PIFW…EACP, WTPW…ACDT, NGGW…QACP, RGAW…QACP, and EGWS…RPCP. 6 disulfides stabilise this stretch: Cys-618/Cys-655, Cys-622/Cys-661, Cys-633/Cys-645, Cys-676/Cys-707, Cys-680/Cys-712, and Cys-691/Cys-697. Asn-728 carries an N-linked (GlcNAc...) asparagine glycan. 6 disulfides stabilise this stretch: Cys-807–Cys-844, Cys-811–Cys-849, Cys-822–Cys-834, Cys-864–Cys-901, Cys-868–Cys-906, and Cys-879–Cys-891. An N-linked (GlcNAc...) asparagine glycan is attached at Asn-944. Residues 979–999 traverse the membrane as a helical segment; it reads LIVTGVSCFLVSGLLTLAVYL. Topologically, residues 1000–1093 are cytoplasmic; sequence SCQHCQRQSQ…SPGQRCFPNS (94 aa).

Belongs to the semaphorin family. In terms of tissue distribution, in adult, only detected in brain.

The protein localises to the membrane. Functionally, may act as a positive axonal guidance cue. This is Semaphorin-5B (Sema5b) from Mus musculus (Mouse).